Here is a 398-residue protein sequence, read N- to C-terminus: NADH-quinone oxidoreductase subunit D (398 aa).

The protein belongs to the complex I 49 kDa subunit family. NDH-1 is composed of 14 different subunits. Subunits NuoB, C, D, E, F, and G constitute the peripheral sector of the complex.

The protein resides in the cell inner membrane. The catalysed reaction is a quinone + NADH + 5 H(+)(in) = a quinol + NAD(+) + 4 H(+)(out). In terms of biological role, NDH-1 shuttles electrons from NADH, via FMN and iron-sulfur (Fe-S) centers, to quinones in the respiratory chain. The immediate electron acceptor for the enzyme in this species is believed to be ubiquinone. Couples the redox reaction to proton translocation (for every two electrons transferred, four hydrogen ions are translocated across the cytoplasmic membrane), and thus conserves the redox energy in a proton gradient. In Bradyrhizobium sp. (strain BTAi1 / ATCC BAA-1182), this protein is NADH-quinone oxidoreductase subunit D.